The sequence spans 271 residues: Acyl-[acyl-carrier-protein]--UDP-N-acetylglucosamine O-acyltransferase (271 aa).

It belongs to the transferase hexapeptide repeat family. LpxA subfamily. As to quaternary structure, homotrimer.

The protein resides in the cytoplasm. The catalysed reaction is a (3R)-hydroxyacyl-[ACP] + UDP-N-acetyl-alpha-D-glucosamine = a UDP-3-O-[(3R)-3-hydroxyacyl]-N-acetyl-alpha-D-glucosamine + holo-[ACP]. It participates in glycolipid biosynthesis; lipid IV(A) biosynthesis; lipid IV(A) from (3R)-3-hydroxytetradecanoyl-[acyl-carrier-protein] and UDP-N-acetyl-alpha-D-glucosamine: step 1/6. In terms of biological role, involved in the biosynthesis of lipid A, a phosphorylated glycolipid that anchors the lipopolysaccharide to the outer membrane of the cell. This chain is Acyl-[acyl-carrier-protein]--UDP-N-acetylglucosamine O-acyltransferase, found in Rhizobium rhizogenes (strain K84 / ATCC BAA-868) (Agrobacterium radiobacter).